A 304-amino-acid chain; its full sequence is Thymidylate synthase (304 aa).

Residues R30 and 157–158 (RR) each bind dUMP. C177 (nucleophile) is an active-site residue. DUMP is bound by residues 206 to 209 (RSCD), N217, and 247 to 249 (HVY). D209 is a (6R)-5,10-methylene-5,6,7,8-tetrahydrofolate binding site.

The protein belongs to the thymidylate synthase family. Homodimer.

It localises to the nucleus. The enzyme catalyses dUMP + (6R)-5,10-methylene-5,6,7,8-tetrahydrofolate = 7,8-dihydrofolate + dTMP. Its pathway is pyrimidine metabolism; dTTP biosynthesis. Its activity is regulated as follows. Inhibited by 5-fluoro-2'-deoxyuridine 5'-monophosphate (FdUMP). In terms of biological role, thymidylate synthase required for de novo biosynthesis of pyrimidine deoxyribonucleotides. Required for both nuclear and mitochondrial DNA synthesis. This is Thymidylate synthase (CDC21) from Saccharomyces cerevisiae (strain ATCC 204508 / S288c) (Baker's yeast).